A 476-amino-acid polypeptide reads, in one-letter code: 4-(hydroxymethyl)benzenesulfonate dehydrogenase TsaD1 (476 aa).

Residues tryptophan 154–asparagine 155, lysine 178–glutamate 181, and glycine 230–serine 231 contribute to the NAD(+) site. The active-site Proton acceptor is glutamate 252. An NAD(+)-binding site is contributed by leucine 253. The Nucleophile role is filled by cysteine 286. An NAD(+)-binding site is contributed by glutamate 380.

This sequence belongs to the aldehyde dehydrogenase family. As to quaternary structure, homodimer.

The enzyme catalyses 4-(hydroxymethyl)benzenesulfonate + NAD(+) = 4-formylbenzenesulfonate + NADH + H(+). Involved in the toluene-4-sulfonate degradation pathway. Does not discriminate between the sulfonate and the carboxyl substituents and can also be involved in the p-toluenecarboxylate degradation pathway. The protein is 4-(hydroxymethyl)benzenesulfonate dehydrogenase TsaD1 (tsaD1) of Comamonas testosteroni (Pseudomonas testosteroni).